A 120-amino-acid chain; its full sequence is Acyl carrier protein, mitochondrial (120 aa).

Positions 43-117 (KEITDRVIGV…ETISYLRKTP (75 aa)) constitute a Carrier domain. Ser-77 bears the O-(pantetheine 4'-phosphoryl)serine mark.

The protein belongs to the acyl carrier protein (ACP) family. Complex I is composed of about 45 different subunits. Post-translationally, 4'-phosphopantetheine is transferred from CoA to a specific serine of apo-ACP by acpS. This modification is essential for activity because fatty acids are bound in thioester linkage to the sulfhydryl of the prosthetic group.

It localises to the mitochondrion. It functions in the pathway lipid metabolism; fatty acid biosynthesis. Its function is as follows. Carrier of the growing fatty acid chain in fatty acid biosynthesis. May be involved in the synthesis of very-long-chain fatty acids. Accessory and non-catalytic subunit of the mitochondrial membrane respiratory chain NADH dehydrogenase (Complex I), which functions in the transfer of electrons from NADH to the respiratory chain. This Dictyostelium discoideum (Social amoeba) protein is Acyl carrier protein, mitochondrial (ndufab1).